The following is a 114-amino-acid chain: Hydrogenase maturation factor HypA (114 aa).

His-2 provides a ligand contact to Ni(2+). 4 residues coordinate Zn(2+): Cys-73, Cys-76, Cys-90, and Cys-93.

Belongs to the HypA/HybF family.

Its function is as follows. Involved in the maturation of [NiFe] hydrogenases. Required for nickel insertion into the metal center of the hydrogenase. This Chloroflexus aggregans (strain MD-66 / DSM 9485) protein is Hydrogenase maturation factor HypA.